Reading from the N-terminus, the 123-residue chain is MPTIQQLVRKGRKTKVSKNKTPALKGSPQRRGVCTRVYTTTPKKPNSALRKVARVRLSSQIEVTAYIPGVGHNLQEHSIVLVRGGRVKDLPGVRYRIVRGALDTQGVRNRKQARSRYGAKKEK.

Residues M1–G32 are disordered. Residues R9 to K18 show a composition bias toward basic residues. Position 89 is a 3-methylthioaspartic acid (D89).

It belongs to the universal ribosomal protein uS12 family. As to quaternary structure, part of the 30S ribosomal subunit. Contacts proteins S8 and S17. May interact with IF1 in the 30S initiation complex.

Its function is as follows. With S4 and S5 plays an important role in translational accuracy. Functionally, interacts with and stabilizes bases of the 16S rRNA that are involved in tRNA selection in the A site and with the mRNA backbone. Located at the interface of the 30S and 50S subunits, it traverses the body of the 30S subunit contacting proteins on the other side and probably holding the rRNA structure together. The combined cluster of proteins S8, S12 and S17 appears to hold together the shoulder and platform of the 30S subunit. This is Small ribosomal subunit protein uS12 from Thermobifida fusca (strain YX).